The chain runs to 125 residues: Small ribosomal subunit protein eS8 (125 aa).

Belongs to the eukaryotic ribosomal protein eS8 family. In terms of assembly, part of the 30S ribosomal subunit.

The sequence is that of Small ribosomal subunit protein eS8 from Methanosarcina barkeri (strain Fusaro / DSM 804).